The sequence spans 277 residues: 3-methyl-2-oxobutanoate hydroxymethyltransferase (277 aa).

Mg(2+) is bound by residues Asp54 and Asp93. 3-methyl-2-oxobutanoate-binding positions include 54 to 55, Asp93, and Lys122; that span reads DS. Glu124 contacts Mg(2+). Catalysis depends on Glu191, which acts as the Proton acceptor.

This sequence belongs to the PanB family. Homodecamer; pentamer of dimers. Requires Mg(2+) as cofactor.

It is found in the cytoplasm. It catalyses the reaction 3-methyl-2-oxobutanoate + (6R)-5,10-methylene-5,6,7,8-tetrahydrofolate + H2O = 2-dehydropantoate + (6S)-5,6,7,8-tetrahydrofolate. It functions in the pathway cofactor biosynthesis; (R)-pantothenate biosynthesis; (R)-pantoate from 3-methyl-2-oxobutanoate: step 1/2. Its function is as follows. Catalyzes the reversible reaction in which hydroxymethyl group from 5,10-methylenetetrahydrofolate is transferred onto alpha-ketoisovalerate to form ketopantoate. This Alkalilimnicola ehrlichii (strain ATCC BAA-1101 / DSM 17681 / MLHE-1) protein is 3-methyl-2-oxobutanoate hydroxymethyltransferase.